A 554-amino-acid polypeptide reads, in one-letter code: Formate--tetrahydrofolate ligase (554 aa).

Residue 65–72 (TPAGEGKT) coordinates ATP.

It belongs to the formate--tetrahydrofolate ligase family.

The catalysed reaction is (6S)-5,6,7,8-tetrahydrofolate + formate + ATP = (6R)-10-formyltetrahydrofolate + ADP + phosphate. It participates in one-carbon metabolism; tetrahydrofolate interconversion. This Petrotoga mobilis (strain DSM 10674 / SJ95) protein is Formate--tetrahydrofolate ligase.